The chain runs to 215 residues: Transcription factor LAX PANICLE 1 (215 aa).

The disordered stretch occupies residues 1-48 (MHDPRGFPIHPQPYHLHPTAGGLGEGRMRGGGRRRPGAKLSTDPQSVA). Residues 40 to 53 (LSTDPQSVAARERR) form a basic motif; degenerate region. In terms of domain architecture, bHLH spans 40 to 89 (LSTDPQSVAARERRHRISDRFRVLRSLVPGGSKMDTVSMLEQAIHYVKFL). The segment at 54–89 (HRISDRFRVLRSLVPGGSKMDTVSMLEQAIHYVKFL) is helix-loop-helix motif.

This sequence belongs to the bHLH protein family. In terms of assembly, efficient DNA binding requires dimerization with another bHLH protein. Interacts with LAX2. As to expression, expressed in the boundary between the shoot apical meristem (SAM) and the region of new meristem formation.

The protein resides in the nucleus. Its function is as follows. Transcription factor that seems to regulate organogenesis in postembryonic development. Involved in the regulation of shoot branching by controlling axillary meristem initiation. Functions in association with LAX2 to regulate the process of AM formation. Possesses transactivation activity in yeast. In Oryza sativa subsp. japonica (Rice), this protein is Transcription factor LAX PANICLE 1.